The chain runs to 144 residues: D-aminoacyl-tRNA deacylase (144 aa).

The short motif at 136 to 137 (GP) is the Gly-cisPro motif, important for rejection of L-amino acids element.

This sequence belongs to the DTD family. In terms of assembly, homodimer.

The protein resides in the cytoplasm. The enzyme catalyses glycyl-tRNA(Ala) + H2O = tRNA(Ala) + glycine + H(+). The catalysed reaction is a D-aminoacyl-tRNA + H2O = a tRNA + a D-alpha-amino acid + H(+). Its function is as follows. An aminoacyl-tRNA editing enzyme that deacylates mischarged D-aminoacyl-tRNAs. Also deacylates mischarged glycyl-tRNA(Ala), protecting cells against glycine mischarging by AlaRS. Acts via tRNA-based rather than protein-based catalysis; rejects L-amino acids rather than detecting D-amino acids in the active site. By recycling D-aminoacyl-tRNA to D-amino acids and free tRNA molecules, this enzyme counteracts the toxicity associated with the formation of D-aminoacyl-tRNA entities in vivo and helps enforce protein L-homochirality. The protein is D-aminoacyl-tRNA deacylase of Vibrio vulnificus (strain CMCP6).